Reading from the N-terminus, the 150-residue chain is Transcription antitermination protein NusB (150 aa).

This sequence belongs to the NusB family.

In terms of biological role, involved in transcription antitermination. Required for transcription of ribosomal RNA (rRNA) genes. Binds specifically to the boxA antiterminator sequence of the ribosomal RNA (rrn) operons. The sequence is that of Transcription antitermination protein NusB from Alcanivorax borkumensis (strain ATCC 700651 / DSM 11573 / NCIMB 13689 / SK2).